Consider the following 870-residue polypeptide: Radial spoke head 10 homolog B (870 aa).

Basic and acidic residues predominate over residues 1 to 16 (MVKEKKKADKKGEKSA). Residues 1–43 (MVKEKKKADKKGEKSARSPSSLSDNLDFSKQDGNTTRQEMSPA) form a disordered region. The span at 17-39 (RSPSSLSDNLDFSKQDGNTTRQE) shows a compositional bias: polar residues. MORN repeat units follow at residues 86–108 (YEGE…GGCT), 109–131 (YRGM…DGLK), 132–154 (YEGD…DGSM), 155–177 (YEGE…TQPV), 179–201 (YIGH…QEGT), 204–226 (YEGD…SGNI), 227–249 (YEGQ…TTNE), 251–273 (YTGR…LKRI), 284–306 (YIGE…SGAM), and 307–329 (YDGE…NGRV). The disordered stretch occupies residues 674-704 (NKSPSAVMSHESDAAHSDSARSSSSKLELSP). Positions 683–692 (HESDAAHSDS) are enriched in basic and acidic residues. The span at 693 to 703 (ARSSSSKLELS) shows a compositional bias: low complexity. The stretch at 784 to 811 (KEKIRADRLRSTAQAQQRKMEDDELEAR) forms a coiled coil. The interval 840–870 (VSSSHLILDPPKEDVTVSPSSKTITSKKKKK) is disordered.

As to quaternary structure, interacts with RSPH6A. Does not appear to be part of the axonemal radial spoke complexes 1 or 2.

It is found in the cytoplasm. The protein resides in the cytoskeleton. It localises to the cilium axoneme. Its subcellular location is the cell projection. The protein localises to the cilium. It is found in the flagellum. May function as part of the axonemal radial spoke complex 3 (RS3). Radial spoke complexes are important for ciliary motility. This chain is Radial spoke head 10 homolog B (RSPH10B), found in Homo sapiens (Human).